Reading from the N-terminus, the 901-residue chain is Quinate repressor protein (901 aa).

Residues 1–88 are sufficient for repression; it reads MSILVRPPKR…DSLQTRRKFP (88 aa). 2 disordered regions span residues 26-59 and 878-901; these read LRDFGQGNSASTPINTSADYGRFDERPGSGDGSR and EEQGEEYDQSAMRTRLENLDGQPM. Residues 31–43 are compositionally biased toward polar residues; that stretch reads QGNSASTPINTSA.

This sequence in the N-terminal section; belongs to the shikimate kinase family. The protein in the 2nd section; belongs to the type-I 3-dehydroquinase family. It in the C-terminal section; belongs to the shikimate dehydrogenase family. As to quaternary structure, interacts with qutA; transcriptional activator of the quinate utilization pathway genes.

Functionally, multi-domain repressor protein that negatively regulates transcription of the quinate utilization pathway genes. May mediate its repressor activity by binding directly to the qutA activator protein. This chain is Quinate repressor protein (qutR), found in Emericella nidulans (strain FGSC A4 / ATCC 38163 / CBS 112.46 / NRRL 194 / M139) (Aspergillus nidulans).